The sequence spans 312 residues: Ribosomal RNA small subunit methyltransferase H (312 aa).

S-adenosyl-L-methionine is bound by residues 35-37 (GGH), Asp-55, Phe-79, Asp-101, and Gln-108.

Belongs to the methyltransferase superfamily. RsmH family.

Its subcellular location is the cytoplasm. It catalyses the reaction cytidine(1402) in 16S rRNA + S-adenosyl-L-methionine = N(4)-methylcytidine(1402) in 16S rRNA + S-adenosyl-L-homocysteine + H(+). Its function is as follows. Specifically methylates the N4 position of cytidine in position 1402 (C1402) of 16S rRNA. This chain is Ribosomal RNA small subunit methyltransferase H, found in Buchnera aphidicola subsp. Acyrthosiphon pisum (strain APS) (Acyrthosiphon pisum symbiotic bacterium).